Reading from the N-terminus, the 320-residue chain is Ferrochelatase (320 aa).

Fe cation contacts are provided by histidine 194 and glutamate 275.

The protein belongs to the ferrochelatase family.

It localises to the cytoplasm. The catalysed reaction is heme b + 2 H(+) = protoporphyrin IX + Fe(2+). The protein operates within porphyrin-containing compound metabolism; protoheme biosynthesis; protoheme from protoporphyrin-IX: step 1/1. Its function is as follows. Catalyzes the ferrous insertion into protoporphyrin IX. The sequence is that of Ferrochelatase from Vibrio cholerae serotype O1 (strain ATCC 39315 / El Tor Inaba N16961).